A 470-amino-acid chain; its full sequence is MSNGRVTQVMGPVIDVRFEHNEVPEINNALIIEVPKEDGTFELTLEVALQLGDDVVRTIAMDSTDGVQRGMEVQNTGKDISVPVGEVTLGRVFNVLGDTIDLEDKLDGSVRRDPIHRQSPNFDELSTEVEILETGIKVVDLLAPYIKGGKIGLFGGAGVGKTVLIQELINNIAQEHGGISVFAGVGERTREGNDLYYEMRDSGVIKKTAMVFGQMNEPPGARMRVALSALTMAEYFRDEQGQDVLLFIDNIFRFTQAGSEVSALLGRMPSAVGYQPTLATEMGQLQERITSTNKGSVTSIQAVFVPADDYTDPAPATAFAHLDATTNLERKLTEMGIYPAVDPLASTSRALEPAIVGQEHYEVARDVQSTLQKYRELQDIIAILGMDELSEEDKLTVERARRIQFFLSQNFHVAEQFTGQKGSYVPVKTTVADFKDILDGKYDHIPEDAFRLVGSMEDVIAKAKDMGVEV.

155-162 (GGAGVGKT) is a binding site for ATP.

Belongs to the ATPase alpha/beta chains family. In terms of assembly, F-type ATPases have 2 components, CF(1) - the catalytic core - and CF(0) - the membrane proton channel. CF(1) has five subunits: alpha(3), beta(3), gamma(1), delta(1), epsilon(1). CF(0) has three main subunits: a(1), b(2) and c(9-12). The alpha and beta chains form an alternating ring which encloses part of the gamma chain. CF(1) is attached to CF(0) by a central stalk formed by the gamma and epsilon chains, while a peripheral stalk is formed by the delta and b chains.

It localises to the cell membrane. The catalysed reaction is ATP + H2O + 4 H(+)(in) = ADP + phosphate + 5 H(+)(out). Produces ATP from ADP in the presence of a proton gradient across the membrane. The catalytic sites are hosted primarily by the beta subunits. The protein is ATP synthase subunit beta of Staphylococcus haemolyticus (strain JCSC1435).